A 431-amino-acid chain; its full sequence is E3 ubiquitin-protein ligase RNF128 (431 aa).

Residues 1–38 (MGQLPGAGVFCRGGCGFSRLLAWCFLLVLSPQTPGSRG) form the signal peptide. N-linked (GlcNAc...) asparagine glycans are attached at residues Asn-48, Asn-59, and Asn-101. The 112-residue stretch at 75–186 (SPLEPVAGVL…LKGTKILQSI (112 aa)) folds into the PA domain. Residues 211 to 231 (IFFVSVSFFIITAATVGYFIF) form a helical membrane-spanning segment. The RING-type; atypical zinc finger occupies 280 to 321 (CAVCIELYKPNDLVRILTCNHVFHKTCVDPWLLEHRTCPMCK). The span at 345–354 (VSNETSSNAS) shows a compositional bias: polar residues. The tract at residues 345–431 (VSNETSSNAS…QETTVREIKS (87 aa)) is disordered.

Post-translationally, auto-ubiquitinated. Controls the development of T-cell clonal anergy by ubiquitination.

It is found in the cytoplasm. The protein localises to the endomembrane system. Its subcellular location is the cytoskeleton. The protein resides in the perinuclear region. It catalyses the reaction S-ubiquitinyl-[E2 ubiquitin-conjugating enzyme]-L-cysteine + [acceptor protein]-L-lysine = [E2 ubiquitin-conjugating enzyme]-L-cysteine + N(6)-ubiquitinyl-[acceptor protein]-L-lysine.. It participates in protein modification; protein ubiquitination. Its function is as follows. E3 ubiquitin-protein ligase that catalyzes 'Lys-27', 'Lys-48'- or 'Lys-63'-linked polyubiquitin chains formation and plays a role in different biological processes such as modulation of immune response, cytoskeletal dynamics or protein homeostasis. Inhibits IL2 and IL4 transcription, thereby playing an important role in the induction of the anergic phenotype, a long-term stable state of T-lymphocyte unresponsiveness to antigenic stimulation associated with the blockade of interleukin production. Ubiquitinates ARPC5 with 'Lys-48' linkages and COR1A with 'Lys-63' linkages leading to their degradation, down-regulation of these cytoskeletal components results in impaired lamellipodium formation and reduced accumulation of F-actin at the immunological synapse. Functions in the patterning of the dorsal ectoderm; sensitizes ectoderm to respond to neural-inducing signals. Plays a positive role in innate immune response by promoting 'Lys-63'-linked ubiquitination of TBK1 after RNA- or DNA-virus infection. Regulates alveolar macrophage activation and neutrophil infiltration by interacting with TLR4, targeting it for degradation, and inhibiting NF-kappa-B activation, hence decreasing pro-inflammatory cytokines. Negatively regulates the IL-3/STAT5 signaling pathway by facilitating 'Lys-27'-linked polyubiquitination of IL3RA leading to its degradation via lysosomal pathway. Directly regulates the N-glycosylation process in the endoplasmic reticulum by targeting the glycosyl-transferase RPN1 for ubiquitination and degradation. Other substrates targeted for degradation by RNF128 include transmembrane proteins CD40L, CD83 or the tetraspanin CD151. In Bos taurus (Bovine), this protein is E3 ubiquitin-protein ligase RNF128 (RNF128).